Consider the following 68-residue polypeptide: Sec-independent protein translocase protein TatA (68 aa).

A helical membrane pass occupies residues 1–21 (MGSFSIWHWLIVLAVVLLLFG). Residues 48–68 (AAAADKSIDGKTVDHKSDEVR) form a disordered region. Basic and acidic residues predominate over residues 53–68 (KSIDGKTVDHKSDEVR).

This sequence belongs to the TatA/E family. The Tat system comprises two distinct complexes: a TatABC complex, containing multiple copies of TatA, TatB and TatC subunits, and a separate TatA complex, containing only TatA subunits. Substrates initially bind to the TatABC complex, which probably triggers association of the separate TatA complex to form the active translocon.

It is found in the cell inner membrane. In terms of biological role, part of the twin-arginine translocation (Tat) system that transports large folded proteins containing a characteristic twin-arginine motif in their signal peptide across membranes. TatA could form the protein-conducting channel of the Tat system. The protein is Sec-independent protein translocase protein TatA of Sinorhizobium medicae (strain WSM419) (Ensifer medicae).